Here is a 233-residue protein sequence, read N- to C-terminus: MGEDLNIRIKDLPYEERPRERLIKYGPQVLSNAELIAIIIGTGSRRENAISLAQKLITEERGLKFIVNSSVEKLANIRGIGIAKAVKLKAAVELGRRLMLSTQGENFSVTSPEDVINLLMEEMRYLSKEHFKVVMLNVKNKIIAIETISIGSLNTSIVHPREVFKAAIERSASSIILVHNHPSGDPTPSREDVEVTKRLVEAGNILGIKVLDHVIIGDGRGISLKEKGYYDFE.

The MPN domain maps to 108–230 (SVTSPEDVIN…GISLKEKGYY (123 aa)). Zn(2+) contacts are provided by His179, His181, and Asp192. A JAMM motif motif is present at residues 179 to 192 (HNHPSGDPTPSRED).

This sequence belongs to the UPF0758 family.

The polypeptide is UPF0758 protein TTE0897 (Caldanaerobacter subterraneus subsp. tengcongensis (strain DSM 15242 / JCM 11007 / NBRC 100824 / MB4) (Thermoanaerobacter tengcongensis)).